Reading from the N-terminus, the 211-residue chain is Secreted phosphoprotein 24 (211 aa).

An N-terminal signal peptide occupies residues Met-1–Gly-29. Disulfide bonds link Cys-92-Cys-103 and Cys-116-Cys-134. Ser-96 is modified (phosphoserine). Ser-145, Ser-146, Ser-170, Ser-173, and Ser-182 each carry phosphoserine.

It belongs to the SPP2 family. In terms of processing, phosphorylation sites are present in the extracellular medium. Detected in liver and plasma.

Its subcellular location is the secreted. Functionally, could coordinate an aspect of bone turnover. The protein is Secreted phosphoprotein 24 (SPP2) of Homo sapiens (Human).